A 944-amino-acid chain; its full sequence is Translation initiation factor IF-2 (944 aa).

2 disordered regions span residues 50-91 and 114-349; these read SAKT…FAGK and KVEV…VPAT. Composition is skewed to basic and acidic residues over residues 75–86, 124–157, 164–185, and 199–233; these read ESAKKNKEDHPR, VVTE…ETKD, AEVK…EKKK, and KRAE…DNRR. Residues 267-280 show a composition bias toward polar residues; it reads SSGSAPATDSFTPA. Basic and acidic residues predominate over residues 286 to 307; it reads SRRDRDRKKSDNNRDNTKDGNR. 2 stretches are compositionally biased toward polar residues: residues 317-331 and 338-348; these read NRNQ…NWNQ and YQNNQSSSVPA. A tr-type G domain is found at 443-614; it reads ERPAVVTIMG…LLVAEVQELK (172 aa). A G1 region spans residues 452–459; that stretch reads GHVDHGKT. 452 to 459 is a binding site for GTP; that stretch reads GHVDHGKT. The interval 477-481 is G2; it reads GITQH. Residues 498–501 are G3; it reads DTPG. GTP is bound by residues 498–502 and 552–555; these read DTPGH and NKID. The G4 stretch occupies residues 552–555; sequence NKID. The G5 stretch occupies residues 590–592; the sequence is SAK.

It belongs to the TRAFAC class translation factor GTPase superfamily. Classic translation factor GTPase family. IF-2 subfamily.

The protein resides in the cytoplasm. Functionally, one of the essential components for the initiation of protein synthesis. Protects formylmethionyl-tRNA from spontaneous hydrolysis and promotes its binding to the 30S ribosomal subunits. Also involved in the hydrolysis of GTP during the formation of the 70S ribosomal complex. The polypeptide is Translation initiation factor IF-2 (infB) (Lactococcus lactis subsp. lactis (strain IL1403) (Streptococcus lactis)).